Here is a 144-residue protein sequence, read N- to C-terminus: Deoxyuridine 5'-triphosphate nucleotidohydrolase (144 aa).

Residues 63-65 (RSG), Asn-76, and 80-82 (TID) each bind substrate.

It belongs to the dUTPase family. Mg(2+) is required as a cofactor.

It carries out the reaction dUTP + H2O = dUMP + diphosphate + H(+). It participates in pyrimidine metabolism; dUMP biosynthesis; dUMP from dCTP (dUTP route): step 2/2. Functionally, this enzyme is involved in nucleotide metabolism: it produces dUMP, the immediate precursor of thymidine nucleotides and it decreases the intracellular concentration of dUTP so that uracil cannot be incorporated into DNA. This chain is Deoxyuridine 5'-triphosphate nucleotidohydrolase, found in Porphyromonas gingivalis (strain ATCC BAA-308 / W83).